Consider the following 117-residue polypeptide: MPRVKRGFKARQRRNKVLKLAKGYRGARSKLFRSATEAVDRALNYAFRDRRVKKRDFRALWITRINAAARINGISYSKLIHGLKQAKVEVDRKVMADLAVSDPRGFAEIVSLAKANA.

This sequence belongs to the bacterial ribosomal protein bL20 family.

Its function is as follows. Binds directly to 23S ribosomal RNA and is necessary for the in vitro assembly process of the 50S ribosomal subunit. It is not involved in the protein synthesizing functions of that subunit. In Geotalea daltonii (strain DSM 22248 / JCM 15807 / FRC-32) (Geobacter daltonii), this protein is Large ribosomal subunit protein bL20.